We begin with the raw amino-acid sequence, 490 residues long: Glycine--tRNA ligase (490 aa).

2 residues coordinate substrate: arginine 99 and glutamate 163. ATP is bound by residues 195–197 (RNE), 205–210 (FRTREF), 282–283 (EL), and 326–329 (GLTR). 210-214 (FEQME) is a substrate binding site. Substrate is bound at residue 322–326 (EPAAG). The segment at 470-490 (PVEMGGEPWPESGVQEAGGLY) is disordered.

This sequence belongs to the class-II aminoacyl-tRNA synthetase family. In terms of assembly, homodimer.

It is found in the cytoplasm. It catalyses the reaction tRNA(Gly) + glycine + ATP = glycyl-tRNA(Gly) + AMP + diphosphate. Catalyzes the attachment of glycine to tRNA(Gly). This is Glycine--tRNA ligase from Bifidobacterium longum (strain NCC 2705).